Consider the following 4138-residue polypeptide: Fumosorinone synthetase (4138 aa).

Positions 15-455 constitute a Ketosynthase family 3 (KS3) domain; it reads PEPIAIVGSA…GTNAHAIIER (441 aa). Residues cysteine 189, histidine 328, and histidine 375 each act as for beta-ketoacyl synthase activity in the active site. Residues 590 to 921 form a malonyl-CoA:ACP transacylase (MAT) domain region; sequence VFTGQGAQWP…APDAVSFSTA (332 aa). Residues 990–1133 are N-terminal hotdog fold; it reads HELLGRRAVD…GLIDVHLGPR (144 aa). The segment at 990–1306 is dehydratase (DH) domain; sequence HELLGRRAVD…GFEVRSVGER (317 aa). The 320-residue stretch at 990–1309 folds into the PKS/mFAS DH domain; that stretch reads HELLGRRAVD…VRSVGERDAA (320 aa). Residue histidine 1022 is the Proton acceptor; for dehydratase activity of the active site. The tract at residues 1157–1309 is C-terminal hotdog fold; it reads LQEIDCEKLY…VRSVGERDAA (153 aa). The active-site Proton donor; for dehydratase activity is the aspartate 1216. Residues 1456–1650 form a methyltransferase (MT) domain region; the sequence is RFYAEDKGMQ…FSGADHVAHD (195 aa). Positions 2205 to 2379 are ketoreductase (KR) domain; the sequence is TYLMVGAAGG…AASIIHVGFV (175 aa). A Carrier 1 domain is found at 2507 to 2587; sequence EAAAAVRRAF…QLSTLAAKLA (81 aa). Position 2547 is an O-(pantetheine 4'-phosphoryl)serine (serine 2547). Residues 2587-2683 are disordered; the sequence is ARQQSPRKEG…TEPKTEDKVS (97 aa). Over residues 2610 to 2621 the composition is skewed to basic and acidic residues; it reads TQDKLVDDKEQK. The segment covering 2622-2643 has biased composition (polar residues); sequence VQVTSSLAKADSLTQEMQASAH. The segment covering 2647–2659 has biased composition (low complexity); that stretch reads DSATNPTPSSTAS. Positions 2664–2675 are enriched in polar residues; it reads SNSQSTRSTSTE. The interval 2701–3128 is condensation (C) domain; it reads REAPMSAAQA…ASQRVRECAV (428 aa). The tract at residues 3162–3564 is adenylation (A) (KR) domain; sequence CQKNSARTAI…DGTLLCFGRI (403 aa). The 80-residue stretch at 3680 to 3759 folds into the Carrier 2 domain; sequence EKMTIQEGEL…GMTRCVLAQR (80 aa). The residue at position 3719 (serine 3719) is an O-(pantetheine 4'-phosphoryl)serine. The interval 3813 to 4045 is reductase (RED) domain; it reads LTGATGFLGG…LDFGTVDAVV (233 aa).

The protein in the C-terminal section; belongs to the NRP synthetase family.

Functionally, hybrid PKS-NRPS synthetase; part of the gene cluster that mediates the biosynthesis of fumosorinone, a 2-pyridone alkaloid that acts as an inhibitor of protein tyrosine phosphatase 1B which is implicated asa negative regulator of insulin receptor signaling and a potential drug target for the treatment of type II diabetes and other associated metabolic syndromes. The polyketide-amino acid backbone of fumosorinone is first assembled by the PKS-NRPS hybrid fumoS. The PKS modules condense one acetyl-CoA starter unit with 7 malonyl-CoA units, programmed C-methylations occurring after the first 3 and the sixth extensions, and cycles of full reduction occurring after the first 2 extensions. Because fumoS lacks a designated enoyl reductase (ER) domain, the required activity is provided the enoyl reductase fumoC. Upon formation of the polyketide backbone on the thiotemplate, the polyketide is transferred to the NRPS module and linked to tyrosine to produce the acyltetramic acid intermediate called prefumosorinone A. The cytochrome P450 monooxygenase fumoA then probably catalyzes an unprecedented oxidative ring expansion of prefumosorinone A to form prefumosorinone B which contains the 2-pyridone core of fumosorinone. The cytochrome P450 monooxygenase fumoB might hydroxylate the nitrogen of prefumosorinone B, but not the acyltetramic acid prefumosorinone A, to form fumosorinone. The protein is Fumosorinone synthetase of Cordyceps fumosorosea (strain ARSEF 2679) (Isaria fumosorosea).